Consider the following 395-residue polypeptide: Acetate kinase (395 aa).

Asn7 contributes to the Mg(2+) binding site. Residue Lys14 participates in ATP binding. Residue Arg88 participates in substrate binding. The active-site Proton donor/acceptor is the Asp145. Residues 205–209 (HLGNG), 279–281 (DFR), and 327–331 (GIGEN) contribute to the ATP site. Glu381 lines the Mg(2+) pocket.

It belongs to the acetokinase family. As to quaternary structure, homodimer. It depends on Mg(2+) as a cofactor. Mn(2+) is required as a cofactor.

It localises to the cytoplasm. The catalysed reaction is acetate + ATP = acetyl phosphate + ADP. The protein operates within metabolic intermediate biosynthesis; acetyl-CoA biosynthesis; acetyl-CoA from acetate: step 1/2. Functionally, catalyzes the formation of acetyl phosphate from acetate and ATP. Can also catalyze the reverse reaction. The polypeptide is Acetate kinase (Campylobacter jejuni subsp. jejuni serotype O:6 (strain 81116 / NCTC 11828)).